A 658-amino-acid polypeptide reads, in one-letter code: MSNTVSLQFPDGSVREYDASMTGAALAESISKSLAKKAVAYAVDGTVRDLSDPLGASGKLEIITREDPRALELIRHDTAHVLAEAVQELFPGTQVTIGPVIENGFYYDFARNEPFTLDDLPVIEKKMREIIQRNKPFTKEVWSREKAKQVFSDKGESYKVELVDAIPAGQDLKIYYQGDWFDLCRGPHMASTGQIGNSFKLMKVAGAYWRGDANNPMLTRIYGTAFANDNDLQAYLHMLEEAEKRDHRRLGREMDLFHFQEEGPGVVFWHAKGWKMFQNLVSYMRRRLDSHGYQEVNTPQVLDKSLWETSGHWGWYRDNMFKVTVAGDDTDDDRVFALKPMNCPGHVQIFKHGLKSYRDLPIKLAEFGNVHRYEPSGALHGLMRVRGFTQDDAHIFCTEEQMAAECLHINDLILSVYKDFGFEEITIKLSTRPEKRVGSDELWDRAESVMMTVLEQIRQQSNNIKTGILPGEGAFYGPKFEYTLKDAIGREWQCGTTQVDFNLPERFGAFYIGADSEKKQPVMIHRAICGSMERFLGILIENFAGHMPLWFAPVQVVVATITSDADEYAKEAAAKLKAAGLQVVTDLRNEKINYKVREHSLQKVPVILVCGKREAEEKTVNMRRLGSRDQESMTLDEAIARLCEEATPPDLLRLKNAG.

The 64-residue stretch at 1–64 (MSNTVSLQFP…GASGKLEIIT (64 aa)) folds into the TGS domain. Residues 246 to 548 (DHRRLGREMD…LIENFAGHMP (303 aa)) form a catalytic region. Zn(2+) contacts are provided by C343, H394, and H525.

Belongs to the class-II aminoacyl-tRNA synthetase family. As to quaternary structure, homodimer. It depends on Zn(2+) as a cofactor.

Its subcellular location is the cytoplasm. It carries out the reaction tRNA(Thr) + L-threonine + ATP = L-threonyl-tRNA(Thr) + AMP + diphosphate + H(+). Its function is as follows. Catalyzes the attachment of threonine to tRNA(Thr) in a two-step reaction: L-threonine is first activated by ATP to form Thr-AMP and then transferred to the acceptor end of tRNA(Thr). Also edits incorrectly charged L-seryl-tRNA(Thr). The sequence is that of Threonine--tRNA ligase from Brucella abortus (strain S19).